The sequence spans 118 residues: IgW heavy chain V region W26 (118 aa).

The region spanning 1–109 is the Ig-like domain; sequence NIVLTQPESA…PQWGYWGSGT (109 aa). An intrachain disulfide couples cysteine 22 to cysteine 93.

In terms of tissue distribution, expressed mainly in lymphoid tissues including spleen, epigonal organ and circulating lymphocytes.

This Heterodontus francisci (Horn shark) protein is IgW heavy chain V region W26.